A 322-amino-acid chain; its full sequence is Elongation factor P--(R)-beta-lysine ligase (322 aa).

Substrate is bound at residue 75-77; the sequence is SPE. 99–101 is an ATP binding site; it reads RNE. A substrate-binding site is contributed by Y117. ATP is bound at residue 241–242; it reads EL. E248 contacts substrate. G297 contacts ATP.

The protein belongs to the class-II aminoacyl-tRNA synthetase family. EpmA subfamily. As to quaternary structure, homodimer.

It carries out the reaction D-beta-lysine + L-lysyl-[protein] + ATP = N(6)-((3R)-3,6-diaminohexanoyl)-L-lysyl-[protein] + AMP + diphosphate + H(+). In terms of biological role, with EpmB is involved in the beta-lysylation step of the post-translational modification of translation elongation factor P (EF-P). Catalyzes the ATP-dependent activation of (R)-beta-lysine produced by EpmB, forming a lysyl-adenylate, from which the beta-lysyl moiety is then transferred to the epsilon-amino group of a conserved specific lysine residue in EF-P. This Avibacterium paragallinarum (Haemophilus gallinarum) protein is Elongation factor P--(R)-beta-lysine ligase.